A 155-amino-acid polypeptide reads, in one-letter code: Ribosomal RNA large subunit methyltransferase H (155 aa).

S-adenosyl-L-methionine-binding positions include Leu-72, Gly-103, and 122-127 (LSALTL).

Belongs to the RNA methyltransferase RlmH family. As to quaternary structure, homodimer.

It is found in the cytoplasm. The catalysed reaction is pseudouridine(1915) in 23S rRNA + S-adenosyl-L-methionine = N(3)-methylpseudouridine(1915) in 23S rRNA + S-adenosyl-L-homocysteine + H(+). In terms of biological role, specifically methylates the pseudouridine at position 1915 (m3Psi1915) in 23S rRNA. The sequence is that of Ribosomal RNA large subunit methyltransferase H from Shigella boydii serotype 18 (strain CDC 3083-94 / BS512).